The sequence spans 457 residues: Multidrug resistance protein MdtK (457 aa).

The next 12 helical transmembrane spans lie at 11–31 (LLAL…MGFV), 53–73 (IWLP…PVIA), 93–113 (WLAG…GYII), 127–147 (AVGY…FQVA), 160–180 (GMVM…IFIY), 189–209 (GGVG…LAMV), 243–263 (LPIA…ALLV), 276–296 (IALN…AAVT), 314–334 (AART…IFTV), 350–370 (VVTL…SDSI), 387–407 (IFYI…YILA), and 418–438 (PAGF…MMML).

The protein belongs to the multi antimicrobial extrusion (MATE) (TC 2.A.66.1) family. MdtK subfamily.

Its subcellular location is the cell inner membrane. In terms of biological role, multidrug efflux pump that functions probably as a Na(+)/drug antiporter. This is Multidrug resistance protein MdtK from Escherichia coli O9:H4 (strain HS).